The chain runs to 45 residues: Mu-conotoxin-like Cal 12.1.1d (45 aa).

Cystine bridges form between cysteine 3–cysteine 16, cysteine 11–cysteine 28, cysteine 18–cysteine 33, and cysteine 27–cysteine 39. A 6'-bromotryptophan modification is found at tryptophan 17. Glutamate 21 carries the 4-carboxyglutamate modification. Residue proline 23 is modified to 4-hydroxyproline. 6'-bromotryptophan is present on residues tryptophan 37 and tryptophan 38. At proline 40 the chain carries 4-hydroxyproline. A 6'-bromotryptophan modification is found at tryptophan 44.

Expressed by the venom duct.

The protein localises to the secreted. Functionally, mu-conotoxins block voltage-gated sodium channels. This toxin reversibly blocks voltage-gated sodium channel in cephalopods, with no alteration in the voltage dependence of sodium conductance or on the kinetics of inactivation. The sequence is that of Mu-conotoxin-like Cal 12.1.1d from Californiconus californicus (California cone).